The chain runs to 244 residues: Transforming protein v-Fos/v-Fox (244 aa).

The transforming protein v-Fos stretch occupies residues 1–236 (DSLSYYHSPA…LFPASSGHSG (236 aa)). A bZIP domain is found at 113 to 176 (EVKRRIRRER…EKLEFILAAH (64 aa)). Residues 115-135 (KRRIRRERNKMAAAKCRNRRR) form a basic motif region. The tract at residues 141–169 (LQAETDQLEDEKSALQTEIANLLKEKEKL) is leucine-zipper. Positions 237–244 (FISMAGWQ) are transforming protein v-Fox.

Belongs to the bZIP family. Fos subfamily.

The protein resides in the host nucleus. The chain is Transforming protein v-Fos/v-Fox (FOS-FOX) from Mus musculus (Mouse).